Reading from the N-terminus, the 148-residue chain is Small ribosomal subunit protein bS6 (148 aa).

Positions His96 to Ala148 are disordered.

It belongs to the bacterial ribosomal protein bS6 family.

In terms of biological role, binds together with bS18 to 16S ribosomal RNA. The polypeptide is Small ribosomal subunit protein bS6 (Brucella canis (strain ATCC 23365 / NCTC 10854 / RM-666)).